A 263-amino-acid chain; its full sequence is Phosphatidylglycerol--prolipoprotein diacylglyceryl transferase (263 aa).

Transmembrane regions (helical) follow at residues 6–26 (VIFSIGPVSIYWYSLAYVLGI), 50–70 (LLTAVIIGIILGGRLGYVLIY), 85–105 (TWEGGMSFHGGAIGVLLAVII), and 112–132 (IPIFYTLDLISCGVPIGLLLG). Arginine 133 serves as a coordination point for a 1,2-diacyl-sn-glycero-3-phospho-(1'-sn-glycerol). A run of 3 helical transmembrane segments spans residues 169-189 (LYEAFFEGALLFVVVNSLFYL), 197-217 (GATTGVAVMLYGVARFMVEFF), and 233-253 (MGQLLSIPMILLGMLIYLGAL).

It belongs to the Lgt family.

Its subcellular location is the cell membrane. It catalyses the reaction L-cysteinyl-[prolipoprotein] + a 1,2-diacyl-sn-glycero-3-phospho-(1'-sn-glycerol) = an S-1,2-diacyl-sn-glyceryl-L-cysteinyl-[prolipoprotein] + sn-glycerol 1-phosphate + H(+). Its pathway is protein modification; lipoprotein biosynthesis (diacylglyceryl transfer). Its function is as follows. Catalyzes the transfer of the diacylglyceryl group from phosphatidylglycerol to the sulfhydryl group of the N-terminal cysteine of a prolipoprotein, the first step in the formation of mature lipoproteins. The polypeptide is Phosphatidylglycerol--prolipoprotein diacylglyceryl transferase (Wolbachia pipientis subsp. Culex pipiens (strain wPip)).